The chain runs to 355 residues: UDP-N-acetylglucosamine--N-acetylmuramyl-(pentapeptide) pyrophosphoryl-undecaprenol N-acetylglucosamine transferase (355 aa).

UDP-N-acetyl-alpha-D-glucosamine is bound by residues 14–16, Asn-126, Arg-164, Ser-190, Ile-243, 262–267, and Gln-288; these read TGG and ALTVAE.

Belongs to the glycosyltransferase 28 family. MurG subfamily.

The protein resides in the cell inner membrane. The catalysed reaction is di-trans,octa-cis-undecaprenyl diphospho-N-acetyl-alpha-D-muramoyl-L-alanyl-D-glutamyl-meso-2,6-diaminopimeloyl-D-alanyl-D-alanine + UDP-N-acetyl-alpha-D-glucosamine = di-trans,octa-cis-undecaprenyl diphospho-[N-acetyl-alpha-D-glucosaminyl-(1-&gt;4)]-N-acetyl-alpha-D-muramoyl-L-alanyl-D-glutamyl-meso-2,6-diaminopimeloyl-D-alanyl-D-alanine + UDP + H(+). Its pathway is cell wall biogenesis; peptidoglycan biosynthesis. Cell wall formation. Catalyzes the transfer of a GlcNAc subunit on undecaprenyl-pyrophosphoryl-MurNAc-pentapeptide (lipid intermediate I) to form undecaprenyl-pyrophosphoryl-MurNAc-(pentapeptide)GlcNAc (lipid intermediate II). In Psychromonas ingrahamii (strain DSM 17664 / CCUG 51855 / 37), this protein is UDP-N-acetylglucosamine--N-acetylmuramyl-(pentapeptide) pyrophosphoryl-undecaprenol N-acetylglucosamine transferase.